Here is a 175-residue protein sequence, read N- to C-terminus: Nucleoside triphosphate/diphosphate phosphatase (175 aa).

Residue R23 is the Proton donor of the active site. Positions 87, 103, 105, 107, 120, and 123 each coordinate Mg(2+).

It belongs to the Ntdp family. The cofactor is Mg(2+).

The enzyme catalyses a ribonucleoside 5'-triphosphate + H2O = a ribonucleoside 5'-diphosphate + phosphate + H(+). The catalysed reaction is a ribonucleoside 5'-diphosphate + H2O = a ribonucleoside 5'-phosphate + phosphate + H(+). In terms of biological role, has nucleoside phosphatase activity towards nucleoside triphosphates and nucleoside diphosphates. In Shouchella clausii (strain KSM-K16) (Alkalihalobacillus clausii), this protein is Nucleoside triphosphate/diphosphate phosphatase.